We begin with the raw amino-acid sequence, 290 residues long: ATP synthase gamma chain (290 aa).

It belongs to the ATPase gamma chain family. In terms of assembly, F-type ATPases have 2 components, CF(1) - the catalytic core - and CF(0) - the membrane proton channel. CF(1) has five subunits: alpha(3), beta(3), gamma(1), delta(1), epsilon(1). CF(0) has three main subunits: a, b and c.

The protein resides in the cell inner membrane. In terms of biological role, produces ATP from ADP in the presence of a proton gradient across the membrane. The gamma chain is believed to be important in regulating ATPase activity and the flow of protons through the CF(0) complex. The polypeptide is ATP synthase gamma chain (Anaeromyxobacter dehalogenans (strain 2CP-1 / ATCC BAA-258)).